Consider the following 143-residue polypeptide: Peptide methionine sulfoxide reductase B9 (143 aa).

The 122-residue stretch at 19-140 (DQDWRAILSP…NSVSLKFSEI (122 aa)) folds into the MsrB domain. 4 residues coordinate Zn(2+): Cys58, Cys61, Cys104, and Cys107. A disulfide bridge connects residues Cys76 and Cys129. The active-site Nucleophile is the Cys129.

This sequence belongs to the MsrB Met sulfoxide reductase family. Requires Zn(2+) as cofactor.

Its subcellular location is the cytoplasm. The protein localises to the cytosol. It catalyses the reaction L-methionyl-[protein] + [thioredoxin]-disulfide + H2O = L-methionyl-(R)-S-oxide-[protein] + [thioredoxin]-dithiol. Catalyzes the reduction of methionine sulfoxide (MetSO) to methionine in proteins. Plays a protective role against oxidative stress by restoring activity to proteins that have been inactivated by methionine oxidation. MSRB family specifically reduces the MetSO R-enantiomer. The sequence is that of Peptide methionine sulfoxide reductase B9 (MSRB9) from Arabidopsis thaliana (Mouse-ear cress).